The primary structure comprises 312 residues: Methionyl-tRNA formyltransferase (312 aa).

110–113 is a binding site for (6S)-5,6,7,8-tetrahydrofolate; sequence SLLP.

This sequence belongs to the Fmt family.

It carries out the reaction L-methionyl-tRNA(fMet) + (6R)-10-formyltetrahydrofolate = N-formyl-L-methionyl-tRNA(fMet) + (6S)-5,6,7,8-tetrahydrofolate + H(+). Functionally, attaches a formyl group to the free amino group of methionyl-tRNA(fMet). The formyl group appears to play a dual role in the initiator identity of N-formylmethionyl-tRNA by promoting its recognition by IF2 and preventing the misappropriation of this tRNA by the elongation apparatus. In Streptococcus suis (strain 05ZYH33), this protein is Methionyl-tRNA formyltransferase.